Consider the following 855-residue polypeptide: Potassium transporter 13 (855 aa).

Positions 1-67 (MFHVEEESSG…EMDSDEEDDN (67 aa)) are disordered. Over 1–105 (MFHVEEESSG…EIEDTGIGKK (105 aa)) the chain is Cytoplasmic. A compositionally biased stretch (acidic residues) spans 36–51 (EKDDYEVNEDYDDDGY). The helical transmembrane segment at 106–126 (LILALQTLGVVFGDIGTSPLY) threads the bilayer. At 127–142 (TFTVMFRRSPINDKED) the chain is on the extracellular side. A helical membrane pass occupies residues 143 to 163 (IIGALSLVIYTLILIPLVKYV). Topologically, residues 164 to 233 (HFVLWANDDG…RLEASMALKK (70 aa)) are cytoplasmic. A helical membrane pass occupies residues 234 to 254 (LLLILVLAGTAMVIADAVVTP). Residues 255–268 (AMSVMSAIGGLKVG) lie on the Extracellular side of the membrane. The chain crosses the membrane as a helical span at residues 269–289 (VGVIEQDQVVVISVSFLVILF). Topologically, residues 290-298 (SVQKYGTSK) are cytoplasmic. Residues 299-319 (LGLVLGPALLLWFFCLAGIGI) traverse the membrane as a helical segment. Topologically, residues 320 to 346 (YNLVKYDSSVFKAFNPAYIYFFFKRNS) are extracellular. Residues 347–367 (VNAWYALGGCVLCATGSEAMF) form a helical membrane-spanning segment. The Cytoplasmic segment spans residues 368–379 (ADLSYFSVHSIQ). A helical transmembrane segment spans residues 380 to 400 (LTFILLVLPCLLLGYLGQAAY). Residues 401–415 (LSENFSAAGDAFFSS) lie on the Extracellular side of the membrane. Asn-404 carries N-linked (GlcNAc...) asparagine glycosylation. A helical membrane pass occupies residues 416–436 (VPSSLFWPVFLISNVAALIAS). Over 437–467 (RAMTTATFTCIKQSIALGCFPRLKIIHTSKK) the chain is Cytoplasmic. A helical membrane pass occupies residues 468–488 (FIGQIYIPVLNWSLLVVCLIV). Topologically, residues 489-503 (VCSTSNIFAIGNAYG) are extracellular. The helical transmembrane segment at 504–524 (IAELGIMMTTTILVTLIMLLI) threads the bilayer. At 525–528 (WQTN) the chain is on the cytoplasmic side. A helical transmembrane segment spans residues 529–549 (IIVVSMFAIVSLIVELVFFSS). The Extracellular segment spans residues 550-553 (VCSS). A helical membrane pass occupies residues 554 to 574 (VADGSWIILVFATIMFLIMFV). The Cytoplasmic segment spans residues 575–855 (WNYGSKLKYE…LMQVGMTYMV (281 aa)). Ser-766 bears the Phosphoserine mark.

Belongs to the HAK/KUP transporter (TC 2.A.72.3) family.

It is found in the cell membrane. Its function is as follows. Probable potassium transporter. The sequence is that of Potassium transporter 13 (POT13) from Arabidopsis thaliana (Mouse-ear cress).